Reading from the N-terminus, the 231-residue chain is Uroporphyrinogen-III C-methyltransferase (231 aa).

Residues Pro10, 85–87, 115–116, Met166, and Ala218 contribute to the S-adenosyl-L-homocysteine site; these read GGD and TS.

This sequence belongs to the precorrin methyltransferase family. Homodimer.

It catalyses the reaction uroporphyrinogen III + 2 S-adenosyl-L-methionine = precorrin-2 + 2 S-adenosyl-L-homocysteine + H(+). It carries out the reaction uroporphyrinogen III + S-adenosyl-L-methionine = precorrin-1 + S-adenosyl-L-homocysteine + H(+). The enzyme catalyses precorrin-1 + S-adenosyl-L-methionine = precorrin-2 + S-adenosyl-L-homocysteine. The protein operates within cofactor biosynthesis; adenosylcobalamin biosynthesis; precorrin-2 from uroporphyrinogen III: step 1/1. Its activity is regulated as follows. Does not show substrate inhibition at uroporphyrinogen III concentrations of up to 20 uM, in contrast to SUMT from Sinorhizobium (previously believed to be P.denitrificans). Functionally, catalyzes the two successive C-2 and C-7 methylation reactions involved in the conversion of uroporphyrinogen III to precorrin-2 via the intermediate formation of precorrin-1. It is a step in the biosynthesis of both cobalamin (vitamin B12) and coenzyme F430. The polypeptide is Uroporphyrinogen-III C-methyltransferase (cobA) (Methanobacterium ivanovii).